Reading from the N-terminus, the 358-residue chain is UPF0575 protein C19orf67 (358 aa).

The tract at residues 1–84 (MATEQWFEGS…PGPAPPRLSL (84 aa)) is disordered. Composition is skewed to pro residues over residues 17-32 (ETPP…PPCG) and 70-80 (PLVPRPGPAPP).

The protein belongs to the UPF0575 family.

In Homo sapiens (Human), this protein is UPF0575 protein C19orf67 (C19orf67).